The sequence spans 303 residues: Plasmodesmata-located protein 1 (303 aa).

The N-terminal stretch at 1–21 (MKLTYQFFIFWFFLPFFAISG) is a signal peptide. Residues 22-268 (DDDYKNLIFK…GEKRQHTERT (247 aa)) are Extracellular-facing. Gnk2-homologous domains follow at residues 27–136 (NLIF…SSGF) and 141–248 (GTEM…YYSH). 6 disulfides stabilise this stretch: Cys33–Cys108, Cys84–Cys93, Cys96–Cys127, Cys149–Cys226, Cys202–Cys211, and Cys214–Cys239. The helical transmembrane segment at 269–289 (IALAVGGVFVLGFVIVCLLVL) threads the bilayer. Residues 269–289 (IALAVGGVFVLGFVIVCLLVL) are necessary and sufficient for plasmodesmal targeting. At 290–303 (RSAMKKKSNKYDAY) the chain is on the cytoplasmic side.

Belongs to the cysteine-rich repeat secretory protein family. Plasmodesmata-located proteins (PDLD) subfamily. As to quaternary structure, interacts with AZI1. Interacts with PDLP5. Does not interact with DIR1. (Microbial infection) Interacts with Grapevine fanleaf virus (GFLV) 2B-MP. Interacts with Cauliflower mosaic virus (CaMV) movement protein. In terms of tissue distribution, highly expressed in cell suspension. Expressed in epidermal and spongy mesophyll cells, and the cell wall interface at the base of the leaf trichome (at protein level). Expressed in haustoria-containing cells.

The protein resides in the cell membrane. The protein localises to the cell junction. Its subcellular location is the plasmodesma. In terms of biological role, modulates cell-to-cell trafficking. Required for systemic acquired resistance (SAR) which is mediated by the signaling molecules azelaic acid (AzA), glycerol-3-phosphate (G3P), and salicylic acid (SA). Required for the proper localization and stability of AZI1 which is involved in SAR. Mediates callose deposition during downy mildew fungal infection around haustoria. Haustoria are unicellular protrusions from hyphae and function as the site of molecular exchange of nutrients and effectors between host and pathogen. The protein is Plasmodesmata-located protein 1 of Arabidopsis thaliana (Mouse-ear cress).